Consider the following 219-residue polypeptide: Protein DMP5 (219 aa).

Residues 1-24 (MSALRLRNANTPAPELDELSDQTP) are disordered. 4 helical membrane-spanning segments follow: residues 51–71 (LSNLLPTGTLLAFQLLTPVFT), 82–102 (FLTAVLLFLLAASCFVSSFTD), 142–162 (MRFVDWIHATLSVLVFGAVAL), and 182–202 (VLDIVPVGVGVMCSLLFMVFP).

Belongs to the plant DMP1 protein family.

Its subcellular location is the endoplasmic reticulum membrane. In terms of biological role, involved in membrane remodeling. This is Protein DMP5 from Arabidopsis thaliana (Mouse-ear cress).